The following is a 426-amino-acid chain: Glutamate-1-semialdehyde 2,1-aminomutase (426 aa).

K265 is subject to N6-(pyridoxal phosphate)lysine.

This sequence belongs to the class-III pyridoxal-phosphate-dependent aminotransferase family. HemL subfamily. As to quaternary structure, homodimer. Pyridoxal 5'-phosphate is required as a cofactor.

It is found in the cytoplasm. It catalyses the reaction (S)-4-amino-5-oxopentanoate = 5-aminolevulinate. Its pathway is porphyrin-containing compound metabolism; protoporphyrin-IX biosynthesis; 5-aminolevulinate from L-glutamyl-tRNA(Glu): step 2/2. This Methylococcus capsulatus (strain ATCC 33009 / NCIMB 11132 / Bath) protein is Glutamate-1-semialdehyde 2,1-aminomutase.